The primary structure comprises 415 residues: Gamma-glutamyl phosphate reductase (415 aa).

The protein belongs to the gamma-glutamyl phosphate reductase family.

Its subcellular location is the cytoplasm. The enzyme catalyses L-glutamate 5-semialdehyde + phosphate + NADP(+) = L-glutamyl 5-phosphate + NADPH + H(+). The protein operates within amino-acid biosynthesis; L-proline biosynthesis; L-glutamate 5-semialdehyde from L-glutamate: step 2/2. Its function is as follows. Catalyzes the NADPH-dependent reduction of L-glutamate 5-phosphate into L-glutamate 5-semialdehyde and phosphate. The product spontaneously undergoes cyclization to form 1-pyrroline-5-carboxylate. In Lachnospira eligens (strain ATCC 27750 / DSM 3376 / VPI C15-48 / C15-B4) (Eubacterium eligens), this protein is Gamma-glutamyl phosphate reductase.